The following is a 441-amino-acid chain: MITRFAPSPTGYMHIGNARTALICWLYARSRSGKLLLRIDDTDLERSENRYVEGIKNDLTWLAMDWDICFNQRSRISRYDEVFNSLMDAGAVYPCYETPEELELKRKMMLKMGLPPIYDRSALNMTEQDQKAYSGRKPYFRLKIGRDQAISWEDEIRGKVVFQAKNISDPILRRTDGSYTYMFPSTVDDIDFEVTHIVRGEDHVSNTAVQIYIMGLLGAKIPSFAHLPLLRMGGSKMSKRVGGTEIFKMRDMNLEPMAINSYMARIGTSLPVEPHTNMRSLVDSFDIKLFNQAPIKFELEDISKLNVRLLQKLPFAEVQDRLEACGIKCSEGFWYAVRDNINVISEVKGWAEICGPGVTPVVDDVNRQLLQLASDLLPEGEPNDGTWKTWLQKIKECSGCETRDILLPLRLALTGVPKGPEFAKLLPLIGRVEILRRLRGA.

Positions 7–17 match the 'HIGH' region motif; sequence PSPTGYMHIGN. The short motif at 236 to 240 is the 'KMSKS' region element; it reads KMSKR. An ATP-binding site is contributed by Lys239.

It belongs to the class-I aminoacyl-tRNA synthetase family. Glutamate--tRNA ligase type 1 subfamily. As to quaternary structure, monomer.

It is found in the cytoplasm. It catalyses the reaction tRNA(Glu) + L-glutamate + ATP = L-glutamyl-tRNA(Glu) + AMP + diphosphate. Functionally, catalyzes the attachment of glutamate to tRNA(Glu) in a two-step reaction: glutamate is first activated by ATP to form Glu-AMP and then transferred to the acceptor end of tRNA(Glu). This is Glutamate--tRNA ligase 1 from Anaplasma marginale (strain St. Maries).